The following is a 137-amino-acid chain: Large ribosomal subunit protein uL16 (137 aa).

The tract at residues 1 to 20 (MLQPKRTKFRKQQKMRNRGL) is disordered.

It belongs to the universal ribosomal protein uL16 family. In terms of assembly, part of the 50S ribosomal subunit.

Binds 23S rRNA and is also seen to make contacts with the A and possibly P site tRNAs. The chain is Large ribosomal subunit protein uL16 from Francisella philomiragia subsp. philomiragia (strain ATCC 25017 / CCUG 19701 / FSC 153 / O#319-036).